The sequence spans 612 residues: UvrABC system protein C (612 aa).

The 79-residue stretch at His21–Val99 folds into the GIY-YIG domain. Residues Gln208–Thr243 form the UVR domain.

This sequence belongs to the UvrC family. Interacts with UvrB in an incision complex.

The protein resides in the cytoplasm. In terms of biological role, the UvrABC repair system catalyzes the recognition and processing of DNA lesions. UvrC both incises the 5' and 3' sides of the lesion. The N-terminal half is responsible for the 3' incision and the C-terminal half is responsible for the 5' incision. The polypeptide is UvrABC system protein C (Idiomarina loihiensis (strain ATCC BAA-735 / DSM 15497 / L2-TR)).